Here is a 437-residue protein sequence, read N- to C-terminus: UDP-N-acetylmuramate--L-alanine ligase (437 aa).

ATP is bound at residue 108 to 114; it reads GAHGKTS.

The protein belongs to the MurCDEF family.

The protein localises to the cytoplasm. The enzyme catalyses UDP-N-acetyl-alpha-D-muramate + L-alanine + ATP = UDP-N-acetyl-alpha-D-muramoyl-L-alanine + ADP + phosphate + H(+). It functions in the pathway cell wall biogenesis; peptidoglycan biosynthesis. In terms of biological role, cell wall formation. The sequence is that of UDP-N-acetylmuramate--L-alanine ligase from Lysinibacillus sphaericus (strain C3-41).